Reading from the N-terminus, the 381-residue chain is Anti-sigma-I factor RsgI (381 aa).

Over 1 to 63 the chain is Cytoplasmic; sequence MRRGIIVEKN…FDFFKLRPFK (63 aa). Residues 2-50 enclose the RsgI N-terminal anti-sigma domain; it reads RRGIIVEKNKKFVTLLTPDGQFLKAKNDRHSYEIGEEIMLPSETRMGRR. A helical membrane pass occupies residues 64-84; the sequence is MGIFTMTAIMLFIFIVLPVFS. Residues 85 to 381 are Extracellular-facing; that stretch reads NNKAYAYMTI…NEDSPSAPGE (297 aa). Residues 198-381 form a disordered region; it reads SDMQTREKAK…NEDSPSAPGE (184 aa). 4 stretches are compositionally biased toward basic and acidic residues: residues 200 to 210, 219 to 244, 273 to 321, and 349 to 359; these read MQTREKAKKEG, SNEKNDNKDIKDDSSKPSGEEDQKSD, GDQK…DKGN, and SRRDNASDRRN.

Interacts (via RsgI N-terminal anti-sigma domain) with SigI.

It localises to the cell membrane. Anti-sigma factor for SigI. Negatively regulates SigI activity through direct interaction. This Bacillus subtilis (strain 168) protein is Anti-sigma-I factor RsgI.